A 48-amino-acid chain; its full sequence is ATP synthase protein 8 (48 aa).

A helical transmembrane segment spans residues 13 to 35; sequence LTYGFTFILTILFLTSYVFLPMI.

The protein belongs to the ATPase protein 8 family. As to quaternary structure, F-type ATPases have 2 components, CF(1) - the catalytic core - and CF(0) - the membrane proton channel. In yeast, the dimeric form of ATP synthase consists of 18 polypeptides: alpha, beta, gamma, delta, epsilon, 4 (B), 5 (OSCP), 6 (A), 8, 9 (C), d, E (Tim11), f, g, h, i, j and k.

Its subcellular location is the mitochondrion membrane. Mitochondrial membrane ATP synthase (F(1)F(0) ATP synthase or Complex V) produces ATP from ADP in the presence of a proton gradient across the membrane which is generated by electron transport complexes of the respiratory chain. F-type ATPases consist of two structural domains, F(1) - containing the extramembraneous catalytic core and F(0) - containing the membrane proton channel, linked together by a central stalk and a peripheral stalk. During catalysis, ATP synthesis in the catalytic domain of F(1) is coupled via a rotary mechanism of the central stalk subunits to proton translocation. Part of the complex F(0) domain. Minor subunit located with subunit a in the membrane. The sequence is that of ATP synthase protein 8 (ATP8) from Eremothecium gossypii (strain ATCC 10895 / CBS 109.51 / FGSC 9923 / NRRL Y-1056) (Yeast).